Reading from the N-terminus, the 202-residue chain is Imidazoleglycerol-phosphate dehydratase (202 aa).

It belongs to the imidazoleglycerol-phosphate dehydratase family.

It is found in the cytoplasm. It catalyses the reaction D-erythro-1-(imidazol-4-yl)glycerol 3-phosphate = 3-(imidazol-4-yl)-2-oxopropyl phosphate + H2O. It functions in the pathway amino-acid biosynthesis; L-histidine biosynthesis; L-histidine from 5-phospho-alpha-D-ribose 1-diphosphate: step 6/9. The sequence is that of Imidazoleglycerol-phosphate dehydratase from Acinetobacter baumannii (strain AYE).